Consider the following 300-residue polypeptide: Large ribosomal subunit protein uL18 (300 aa).

Residues 246–267 show a composition bias toward basic and acidic residues; the sequence is NIRSDPKRDRKPKKDVSKEPKR. Residues 246 to 276 form a disordered region; sequence NIRSDPKRDRKPKKDVSKEPKRWNAKKLTNA.

This sequence belongs to the universal ribosomal protein uL18 family. Component of the large ribosomal subunit (LSU).

The protein resides in the cytoplasm. The protein localises to the nucleus. Its function is as follows. Component of the ribosome, a large ribonucleoprotein complex responsible for the synthesis of proteins in the cell. The small ribosomal subunit (SSU) binds messenger RNAs (mRNAs) and translates the encoded message by selecting cognate aminoacyl-transfer RNA (tRNA) molecules. The large subunit (LSU) contains the ribosomal catalytic site termed the peptidyl transferase center (PTC), which catalyzes the formation of peptide bonds, thereby polymerizing the amino acids delivered by tRNAs into a polypeptide chain. The nascent polypeptides leave the ribosome through a tunnel in the LSU and interact with protein factors that function in enzymatic processing, targeting, and the membrane insertion of nascent chains at the exit of the ribosomal tunnel. This is Large ribosomal subunit protein uL18 (RpL5) from Toxoptera citricida (Brown citrus aphid).